Reading from the N-terminus, the 402-residue chain is Multidrug resistance protein MdtH (402 aa).

The Cytoplasmic segment spans residues 1-12 (MSRVSQARNLGK). The chain crosses the membrane as a helical span at residues 13 to 33 (YFLLIDNMLVVLGFFVVFPLI). At 34–98 (SIRFIDQMGW…GFATMGIAHE (65 aa)) the chain is on the periplasmic side. A helical transmembrane segment spans residues 99 to 116 (PWLLWFSCFLSGLGGTLF). Over 117 to 138 (DPPRSALVVKLIRPEQRGRFFS) the chain is Cytoplasmic. A helical membrane pass occupies residues 139–159 (LLMMQDSAGAVIGALLGSWLL). The Periplasmic segment spans residues 160–164 (QYDFR). The chain crosses the membrane as a helical span at residues 165–185 (LVCATGAILFILCALFNAWLL). Residues 186 to 213 (PAWKLSTVRTPVREGMRRVMSDKRFVTY) are Cytoplasmic-facing. A helical transmembrane segment spans residues 214–234 (VLTLAGYYMLAVQVMLMLPIM). Topologically, residues 235–243 (VNDIAGSPA) are periplasmic. The chain crosses the membrane as a helical span at residues 244–264 (AVKWMYAIEACLSLTLLYPIA). Residues 265 to 276 (RWSEKRFRLEHR) lie on the Cytoplasmic side of the membrane. The chain crosses the membrane as a helical span at residues 277–297 (LMAGLLVMSLSMIPIGMVGNL). Topologically, residues 298–299 (QQ) are periplasmic. The chain crosses the membrane as a helical span at residues 300-320 (LFTLICAFYIGSVIAEPARET). The Cytoplasmic segment spans residues 321–339 (LSASLADARARGSYMGFSR). Residues 340–360 (LGLAIGGAIGYIGGGWLFDMG) form a helical membrane-spanning segment. Residues 361–367 (KALTQPE) lie on the Periplasmic side of the membrane. A helical transmembrane segment spans residues 368–388 (LPWMMLGIIGFITFLALGWQF). Residues 389–402 (SHKRTPRRMLEPGA) lie on the Cytoplasmic side of the membrane.

This sequence belongs to the major facilitator superfamily. DHA1 family. MdtH (TC 2.A.1.2.21) subfamily.

It is found in the cell inner membrane. This is Multidrug resistance protein MdtH from Salmonella paratyphi C (strain RKS4594).